The sequence spans 227 residues: ATP-dependent dethiobiotin synthetase BioD (227 aa).

12–17 (DAGKTH) provides a ligand contact to ATP. Threonine 16 lines the Mg(2+) pocket. The active site involves lysine 37. Serine 41 is a binding site for substrate. ATP contacts are provided by residues aspartate 54, 116 to 119 (EGAG), 176 to 177 (NQ), and 205 to 207 (PYS). Aspartate 54 and glutamate 116 together coordinate Mg(2+).

It belongs to the dethiobiotin synthetase family. In terms of assembly, homodimer. The cofactor is Mg(2+).

The protein resides in the cytoplasm. The enzyme catalyses (7R,8S)-7,8-diammoniononanoate + CO2 + ATP = (4R,5S)-dethiobiotin + ADP + phosphate + 3 H(+). It functions in the pathway cofactor biosynthesis; biotin biosynthesis; biotin from 7,8-diaminononanoate: step 1/2. Catalyzes a mechanistically unusual reaction, the ATP-dependent insertion of CO2 between the N7 and N8 nitrogen atoms of 7,8-diaminopelargonic acid (DAPA, also called 7,8-diammoniononanoate) to form a ureido ring. The protein is ATP-dependent dethiobiotin synthetase BioD of Pseudoalteromonas translucida (strain TAC 125).